The following is a 216-amino-acid chain: Pyrophosphatase PpaX (216 aa).

Asp-9 acts as the Nucleophile in catalysis.

It belongs to the HAD-like hydrolase superfamily. PpaX family. It depends on Mg(2+) as a cofactor.

It carries out the reaction diphosphate + H2O = 2 phosphate + H(+). Functionally, hydrolyzes pyrophosphate formed during P-Ser-HPr dephosphorylation by HPrK/P. Might play a role in controlling the intracellular pyrophosphate pool. This chain is Pyrophosphatase PpaX, found in Bacillus thuringiensis (strain Al Hakam).